The primary structure comprises 130 residues: Small ribosomal subunit protein uS11 (130 aa).

It belongs to the universal ribosomal protein uS11 family. Part of the 30S ribosomal subunit. Interacts with proteins S7 and S18. Binds to IF-3.

Located on the platform of the 30S subunit, it bridges several disparate RNA helices of the 16S rRNA. Forms part of the Shine-Dalgarno cleft in the 70S ribosome. This is Small ribosomal subunit protein uS11 from Prochlorococcus marinus (strain MIT 9301).